The primary structure comprises 198 residues: Elongation factor Ts (198 aa).

An involved in Mg(2+) ion dislocation from EF-Tu region spans residues 81 to 84 (TDFV).

It belongs to the EF-Ts family.

It is found in the cytoplasm. Functionally, associates with the EF-Tu.GDP complex and induces the exchange of GDP to GTP. It remains bound to the aminoacyl-tRNA.EF-Tu.GTP complex up to the GTP hydrolysis stage on the ribosome. The chain is Elongation factor Ts from Dictyoglomus turgidum (strain DSM 6724 / Z-1310).